The following is a 179-amino-acid chain: Pyridoxal 5'-phosphate synthase subunit PdxT (179 aa).

48–50 (GES) lines the L-glutamine pocket. Cys-79 serves as the catalytic Nucleophile. Residues Arg-101 and 127 to 128 (IR) each bind L-glutamine. Catalysis depends on charge relay system residues His-163 and Glu-165.

This sequence belongs to the glutaminase PdxT/SNO family. As to quaternary structure, in the presence of PdxS, forms a dodecamer of heterodimers. Only shows activity in the heterodimer.

It catalyses the reaction aldehydo-D-ribose 5-phosphate + D-glyceraldehyde 3-phosphate + L-glutamine = pyridoxal 5'-phosphate + L-glutamate + phosphate + 3 H2O + H(+). It carries out the reaction L-glutamine + H2O = L-glutamate + NH4(+). The protein operates within cofactor biosynthesis; pyridoxal 5'-phosphate biosynthesis. Functionally, catalyzes the hydrolysis of glutamine to glutamate and ammonia as part of the biosynthesis of pyridoxal 5'-phosphate. The resulting ammonia molecule is channeled to the active site of PdxS. The polypeptide is Pyridoxal 5'-phosphate synthase subunit PdxT (Francisella tularensis subsp. tularensis (strain FSC 198)).